Consider the following 414-residue polypeptide: uncharacterized protein (414 aa).

Residues 204–230 form a disordered region; it reads LVGTPAPGPNGSNSDGDSERASQDVRD. Over residues 220–230 the composition is skewed to basic and acidic residues; the sequence is DSERASQDVRD.

The protein belongs to the CdaR family.

This is an uncharacterized protein from Mycobacterium tuberculosis (strain CDC 1551 / Oshkosh).